We begin with the raw amino-acid sequence, 475 residues long: Lipoprotein lipase (475 aa).

Residues 1–27 (MESKALLVLTLAVWLQSLTASRGGVAA) form the signal peptide. Residues 32–53 (RDFIDIESKFALRTPEDTAEDT) form an interaction with GPIHBP1 region. The cysteines at positions 54 and 67 are disulfide-linked. The N-linked (GlcNAc...) asparagine glycan is linked to Asn-70. The residue at position 121 (Tyr-121) is a 3'-nitrotyrosine. Residue Ser-159 is the Nucleophile of the active site. Asp-183 serves as the catalytic Charge relay system. At Tyr-191 the chain carries 3'-nitrotyrosine. Ca(2+) is bound by residues Ala-194, Arg-197, Ser-199, and Asp-202. An intrachain disulfide couples Cys-243 to Cys-266. The essential for determining substrate specificity stretch occupies residues 243–266 (CNIGEAIRVIAERGLGDVDQLVKC). The active-site Charge relay system is the His-268. Intrachain disulfides connect Cys-291/Cys-310 and Cys-302/Cys-305. In terms of domain architecture, PLAT spans 341 to 464 (FHYQVKIHFS…KGKAPAVFVK (124 aa)). Tyr-343 bears the 3'-nitrotyrosine mark. The N-linked (GlcNAc...) asparagine glycan is linked to Asn-386. Residues 417–421 (WSDWW) are important for interaction with lipoprotein particles. Residues 430 to 434 (KIRVK) are important for heparin binding. The segment at 443–467 (IFCSREKVSHLQKGKAPAVFVKCHD) is interaction with GPIHBP1. Cysteines 445 and 465 form a disulfide.

The protein belongs to the AB hydrolase superfamily. Lipase family. Homodimer. Interacts with GPIHBP1 with 1:1 stoichiometry. Interacts with APOC2; the interaction activates LPL activity in the presence of lipids. Interaction with heparan sulfate proteoglycans is required to protect LPL against loss of activity. Associates with lipoprotein particles in blood plasma. Interacts with LMF1 and SEL1L; interaction with SEL1L is required to prevent aggregation of newly synthesized LPL in the endoplasmic reticulum (ER), and for normal export of LPL from the ER to the extracellular space. Interacts with SORL1; SORL1 acts as a sorting receptor, promoting LPL localization to endosomes and later to lysosomes, leading to degradation of newly synthesized LPL. Post-translationally, tyrosine nitration after lipopolysaccharide (LPS) challenge down-regulates the lipase activity. As to expression, detected in blood plasma. Detected in milk (at protein level).

Its subcellular location is the cell membrane. The protein localises to the secreted. It is found in the extracellular space. It localises to the extracellular matrix. It catalyses the reaction a triacylglycerol + H2O = a diacylglycerol + a fatty acid + H(+). The catalysed reaction is a 1,2-diacyl-sn-glycero-3-phosphocholine + H2O = a 2-acyl-sn-glycero-3-phosphocholine + a fatty acid + H(+). The enzyme catalyses 1,2,3-tri-(9Z-octadecenoyl)-glycerol + H2O = di-(9Z)-octadecenoylglycerol + (9Z)-octadecenoate + H(+). It carries out the reaction 1,2-di-(9Z-octadecenoyl)-sn-glycero-3-phosphocholine + H2O = (9Z-octadecenoyl)-sn-glycero-3-phosphocholine + (9Z)-octadecenoate + H(+). It catalyses the reaction 1,2,3-tributanoylglycerol + H2O = dibutanoylglycerol + butanoate + H(+). The catalysed reaction is 1,2-dihexadecanoyl-sn-glycero-3-phosphocholine + H2O = hexadecanoyl-sn-glycero-3-phosphocholine + hexadecanoate + H(+). Its activity is regulated as follows. The apolipoprotein APOC2 acts as a coactivator of LPL activity. Ca(2+) binding promotes protein stability and formation of the active homodimer. Interaction with GPIHBP1 protects LPL against inactivation by ANGPTL4. Inhibited by NaCl. Its function is as follows. Key enzyme in triglyceride metabolism. Catalyzes the hydrolysis of triglycerides from circulating chylomicrons and very low density lipoproteins (VLDL), and thereby plays an important role in lipid clearance from the blood stream, lipid utilization and storage. Although it has both phospholipase and triglyceride lipase activities it is primarily a triglyceride lipase with low but detectable phospholipase activity. Mediates margination of triglyceride-rich lipoprotein particles in capillaries. Recruited to its site of action on the luminal surface of vascular endothelium by binding to GPIHBP1 and cell surface heparan sulfate proteoglycans. The polypeptide is Lipoprotein lipase (LPL) (Homo sapiens (Human)).